A 1224-amino-acid polypeptide reads, in one-letter code: DNA-directed RNA polymerase subunit beta'' (1224 aa).

Residues Cys-223, Cys-297, Cys-304, and Cys-307 each contribute to the Zn(2+) site.

Belongs to the RNA polymerase beta' chain family. RpoC2 subfamily. As to quaternary structure, in plastids the minimal PEP RNA polymerase catalytic core is composed of four subunits: alpha, beta, beta', and beta''. When a (nuclear-encoded) sigma factor is associated with the core the holoenzyme is formed, which can initiate transcription. Zn(2+) is required as a cofactor.

The protein resides in the plastid. Its subcellular location is the chloroplast. It catalyses the reaction RNA(n) + a ribonucleoside 5'-triphosphate = RNA(n+1) + diphosphate. Its function is as follows. DNA-dependent RNA polymerase catalyzes the transcription of DNA into RNA using the four ribonucleoside triphosphates as substrates. In Porphyra purpurea (Red seaweed), this protein is DNA-directed RNA polymerase subunit beta''.